The chain runs to 442 residues: tRNA modification GTPase MnmE (442 aa).

3 residues coordinate (6S)-5-formyl-5,6,7,8-tetrahydrofolate: arginine 27, glutamate 84, and lysine 124. The region spanning 221–366 (GLHVVIVGAP…LLDALQAFAE (146 aa)) is the TrmE-type G domain. GTP-binding positions include 231 to 236 (NAGKSS), 250 to 256 (SEEAGTT), and 275 to 278 (DTAG). Residues serine 235 and threonine 256 each coordinate Mg(2+). Lysine 442 is a binding site for (6S)-5-formyl-5,6,7,8-tetrahydrofolate.

It belongs to the TRAFAC class TrmE-Era-EngA-EngB-Septin-like GTPase superfamily. TrmE GTPase family. In terms of assembly, homodimer. Heterotetramer of two MnmE and two MnmG subunits. It depends on K(+) as a cofactor.

The protein localises to the cytoplasm. Its function is as follows. Exhibits a very high intrinsic GTPase hydrolysis rate. Involved in the addition of a carboxymethylaminomethyl (cmnm) group at the wobble position (U34) of certain tRNAs, forming tRNA-cmnm(5)s(2)U34. The protein is tRNA modification GTPase MnmE of Brucella melitensis biotype 1 (strain ATCC 23456 / CCUG 17765 / NCTC 10094 / 16M).